The chain runs to 342 residues: Alpha-tocopherol transfer protein-like (342 aa).

The tract at residues 1–31 (MSEESDSLRTSPSVASLSENELPPPPEPPGY) is disordered. The segment covering 8–19 (LRTSPSVASLSE) has biased composition (polar residues). The region spanning 117-282 (KPSALKDVLA…EYGGTAGELD (166 aa)) is the CRAL-TRIO domain.

In terms of biological role, may act as a protein that binds a hydrophobic ligand. The polypeptide is Alpha-tocopherol transfer protein-like (TTPAL) (Homo sapiens (Human)).